A 571-amino-acid polypeptide reads, in one-letter code: E3 ubiquitin-protein ligase ipaH3 (571 aa).

The interval 1 to 260 (MSIMLPINNN…SQQTAQPDYH (260 aa)) is interaction with target proteins. LRR repeat units follow at residues 58–81 (INQFSELQLNRLNLSSLPDNLPPQ), 83–99 (TVLEITQNALISLPELP), 100–119 (ASLEYLDACDNRLSTLPELP), 120–144 (ASLKHLDVDNNQLTMLPELPALLEY), 146–159 (NADNNQLTMLPELP), 160–184 (TSLEVLSVRNNQLTFLPELPESLEA), 186–202 (DVSTNLLESLPAVPVRN), 205–229 (SEETEIFFRCRENRITHIPENILSL), and 232–260 (TCTIILEDNPLSSRIRESLSQQTAQPDYH). The linker stretch occupies residues 269–278 (SDGQQNTLHR). The NEL domain occupies 279 to 571 (PLADAVTAWF…SENGSQLHHS (293 aa)). Residues 279–571 (PLADAVTAWF…SENGSQLHHS (293 aa)) form an E3 ubiquitin-protein ligase catalytic domain region. Residue cysteine 363 is the Glycyl thioester intermediate of the active site.

Belongs to the LRR-containing bacterial E3 ligase family. Ubiquitinated in the presence of host E1 ubiquitin-activating enzyme, E2 ubiquitin-conjugating enzyme UBE2D3 and ubiquitin.

The protein localises to the secreted. It is found in the host cytoplasm. The enzyme catalyses S-ubiquitinyl-[E2 ubiquitin-conjugating enzyme]-L-cysteine + [acceptor protein]-L-lysine = [E2 ubiquitin-conjugating enzyme]-L-cysteine + N(6)-ubiquitinyl-[acceptor protein]-L-lysine.. Functionally, effector proteins function to alter host cell physiology and promote bacterial survival in host tissues. This protein is an E3 ubiquitin ligase that interferes with host's ubiquitination pathway. Synthesizes a 'Lys-48'-linked ubiquitin chain, which requires non-covalent binding between ubiquitin and the host ubiquitin-conjugating enzyme UBE2D1. This is E3 ubiquitin-protein ligase ipaH3 (ipaH3) from Shigella flexneri.